We begin with the raw amino-acid sequence, 101 residues long: Large ribosomal subunit protein uL24 (101 aa).

The protein belongs to the universal ribosomal protein uL24 family. In terms of assembly, part of the 50S ribosomal subunit.

Functionally, one of two assembly initiator proteins, it binds directly to the 5'-end of the 23S rRNA, where it nucleates assembly of the 50S subunit. Its function is as follows. One of the proteins that surrounds the polypeptide exit tunnel on the outside of the subunit. The sequence is that of Large ribosomal subunit protein uL24 from Thermobifida fusca (strain YX).